The primary structure comprises 891 residues: DNA mismatch repair protein MutS (891 aa).

643-650 (GPNMGGKS) contributes to the ATP binding site.

It belongs to the DNA mismatch repair MutS family.

Functionally, this protein is involved in the repair of mismatches in DNA. It is possible that it carries out the mismatch recognition step. This protein has a weak ATPase activity. The protein is DNA mismatch repair protein MutS of Xanthomonas campestris pv. campestris (strain ATCC 33913 / DSM 3586 / NCPPB 528 / LMG 568 / P 25).